The chain runs to 666 residues: MRKINLLDLETTNKIAAGEVIERPFSVVKELVENSIDAGAKNITIEIEDGGQKLIKIIDDGEGIYPIDIKNAFLPHATSKINSIEDIYKISTMGFRGEALASISSVSKTKLKSRVDSYNFGKEIYIEGGKIEYLKDTGCNVGTTIEVSDLFYNVPARLKFLKSARSDSSSISDIVNRFILAHPDISFNLINKGKQSIKSYGTGNLKDSIRCVYNKTISENLINFESHKDIISVYGFIGKPEISRKSRTNQSIFVNKRYVKSKFITAAVENAFKSFLTVNSYPFFVIFIDIFPEYIDVNVHPTKSEVKFKDERAMFKTIFDAVHEAIKGELKESFTNFFNKEDINIYDSEKSIAETIKLEKEEVQIPIDLNSNNKIDIFGNNINKLPTNTEVLKNIGIKEKNILENNDNFYTSKQNEIYYTNKNDEYLNSCNKDDYSKIEKPLQKGNKNPDALYLNEHNTNSSSINIKENKSNNFYVDMKIIGQFNNTYILIEKDKELYIIDQHAAHEKVLFEKFKSEIEKGYVISQILLSPVVIELSEDEFNIYEENKDIFKNSGFAVENFGESTINIKEVPLILGKPNVENLFMDILYNLKNMKSKETSTIKYNAIATLACKSAVKANDNLKEEEIKKLIEDMLILNNPYTCPHGRPTMIKFTLKDLEKKFKRIQ.

Belongs to the DNA mismatch repair MutL/HexB family.

Its function is as follows. This protein is involved in the repair of mismatches in DNA. It is required for dam-dependent methyl-directed DNA mismatch repair. May act as a 'molecular matchmaker', a protein that promotes the formation of a stable complex between two or more DNA-binding proteins in an ATP-dependent manner without itself being part of a final effector complex. The sequence is that of DNA mismatch repair protein MutL from Clostridium botulinum (strain Loch Maree / Type A3).